A 494-amino-acid chain; its full sequence is PTS system cellobiose-specific EIIC component (494 aa).

One can recognise a PTS EIIC type-3 domain in the interval 8–481; sequence MEKYLVPVAA…IITFVIWVPF (474 aa). A run of 9 helical transmembrane segments spans residues 32-52, 92-112, 119-139, 188-208, 227-247, 274-294, 355-375, 406-426, and 463-483; these read FIGM…SAIV, ISAL…AFSW, AYGV…FAGL, AYFT…KLML, FLAI…YYII, IFSV…GLHG, AFAW…IILF, VVLN…SVII, and AIVL…PFVI.

It is found in the cell membrane. In terms of biological role, the phosphoenolpyruvate-dependent sugar phosphotransferase system (PTS), a major carbohydrate active transport system, catalyzes the phosphorylation of incoming sugar substrates concomitant with their translocation across the cell membrane. Involved in cellobiose transport with PtcA and PtcB. This system can also transport lactose. This is PTS system cellobiose-specific EIIC component from Lactococcus lactis subsp. lactis (strain IL1403) (Streptococcus lactis).